The chain runs to 165 residues: Large ribosomal subunit protein uL10 (165 aa).

Belongs to the universal ribosomal protein uL10 family. Part of the ribosomal stalk of the 50S ribosomal subunit. The N-terminus interacts with L11 and the large rRNA to form the base of the stalk. The C-terminus forms an elongated spine to which L12 dimers bind in a sequential fashion forming a multimeric L10(L12)X complex.

Forms part of the ribosomal stalk, playing a central role in the interaction of the ribosome with GTP-bound translation factors. The chain is Large ribosomal subunit protein uL10 from Mycoplasma mycoides subsp. mycoides SC (strain CCUG 32753 / NCTC 10114 / PG1).